We begin with the raw amino-acid sequence, 156 residues long: Endoribonuclease YbeY (156 aa).

Positions 114, 118, and 124 each coordinate Zn(2+).

It belongs to the endoribonuclease YbeY family. Zn(2+) is required as a cofactor.

It is found in the cytoplasm. Functionally, single strand-specific metallo-endoribonuclease involved in late-stage 70S ribosome quality control and in maturation of the 3' terminus of the 16S rRNA. The chain is Endoribonuclease YbeY from Sodalis glossinidius (strain morsitans).